A 343-amino-acid polypeptide reads, in one-letter code: 5-amino-6-(D-ribitylamino)uracil--L-tyrosine 4-hydroxyphenyl transferase (343 aa).

A Radical SAM core domain is found at 39-268 (VTYVVNRNIN…AIARILLYPE (230 aa)). [4Fe-4S] cluster-binding residues include Cys-53, Cys-57, and Cys-60.

It belongs to the radical SAM superfamily. CofH family. In terms of assembly, consists of two subunits, CofG and CofH. It depends on [4Fe-4S] cluster as a cofactor.

It catalyses the reaction 5-amino-6-(D-ribitylamino)uracil + L-tyrosine + S-adenosyl-L-methionine = 5-amino-5-(4-hydroxybenzyl)-6-(D-ribitylimino)-5,6-dihydrouracil + 2-iminoacetate + 5'-deoxyadenosine + L-methionine + H(+). It functions in the pathway cofactor biosynthesis; coenzyme F0 biosynthesis. Functionally, catalyzes the radical-mediated synthesis of 5-amino-5-(4-hydroxybenzyl)-6-(D-ribitylimino)-5,6-dihydrouracil from 5-amino-6-(D-ribitylamino)uracil and L-tyrosine. The polypeptide is 5-amino-6-(D-ribitylamino)uracil--L-tyrosine 4-hydroxyphenyl transferase (Archaeoglobus fulgidus (strain ATCC 49558 / DSM 4304 / JCM 9628 / NBRC 100126 / VC-16)).